The primary structure comprises 883 residues: Valine--tRNA ligase (883 aa).

The 'HIGH' region motif lies at 51-61; sequence PNVTGKLHLGH. The 'KMSKS' region motif lies at 527–531; the sequence is KMSKS. ATP is bound at residue lysine 530. Residues 811–847 adopt a coiled-coil conformation; the sequence is LEALIDLNVEIARLEKELEKWNKEVARVQGKLNNERF.

This sequence belongs to the class-I aminoacyl-tRNA synthetase family. ValS type 1 subfamily. In terms of assembly, monomer.

The protein localises to the cytoplasm. It catalyses the reaction tRNA(Val) + L-valine + ATP = L-valyl-tRNA(Val) + AMP + diphosphate. In terms of biological role, catalyzes the attachment of valine to tRNA(Val). As ValRS can inadvertently accommodate and process structurally similar amino acids such as threonine, to avoid such errors, it has a 'posttransfer' editing activity that hydrolyzes mischarged Thr-tRNA(Val) in a tRNA-dependent manner. This Listeria monocytogenes serovar 1/2a (strain ATCC BAA-679 / EGD-e) protein is Valine--tRNA ligase.